Here is a 95-residue protein sequence, read N- to C-terminus: Co-chaperonin GroES (95 aa).

Belongs to the GroES chaperonin family. In terms of assembly, heptamer of 7 subunits arranged in a ring. Interacts with the chaperonin GroEL.

The protein localises to the cytoplasm. Together with the chaperonin GroEL, plays an essential role in assisting protein folding. The GroEL-GroES system forms a nano-cage that allows encapsulation of the non-native substrate proteins and provides a physical environment optimized to promote and accelerate protein folding. GroES binds to the apical surface of the GroEL ring, thereby capping the opening of the GroEL channel. The sequence is that of Co-chaperonin GroES from Staphylococcus haemolyticus (strain JCSC1435).